Consider the following 66-residue polypeptide: Large ribosomal subunit protein bL35 (66 aa).

The protein belongs to the bacterial ribosomal protein bL35 family.

The chain is Large ribosomal subunit protein bL35 from Afipia carboxidovorans (strain ATCC 49405 / DSM 1227 / KCTC 32145 / OM5) (Oligotropha carboxidovorans).